The sequence spans 234 residues: Sugar fermentation stimulation protein homolog (234 aa).

The protein belongs to the SfsA family.

The protein is Sugar fermentation stimulation protein homolog of Idiomarina loihiensis (strain ATCC BAA-735 / DSM 15497 / L2-TR).